The following is a 155-amino-acid chain: Small ribosomal subunit protein uS7 (155 aa).

It belongs to the universal ribosomal protein uS7 family. In terms of assembly, part of the 30S ribosomal subunit. Contacts proteins S9 and S11.

One of the primary rRNA binding proteins, it binds directly to 16S rRNA where it nucleates assembly of the head domain of the 30S subunit. Is located at the subunit interface close to the decoding center, probably blocks exit of the E-site tRNA. The sequence is that of Small ribosomal subunit protein uS7 from Thermotoga neapolitana (strain ATCC 49049 / DSM 4359 / NBRC 107923 / NS-E).